The primary structure comprises 61 residues: Small ribosomal subunit protein uS14 (61 aa).

Zn(2+)-binding residues include C24, C27, C40, and C43.

It belongs to the universal ribosomal protein uS14 family. Zinc-binding uS14 subfamily. Part of the 30S ribosomal subunit. Contacts proteins S3 and S10. It depends on Zn(2+) as a cofactor.

Binds 16S rRNA, required for the assembly of 30S particles and may also be responsible for determining the conformation of the 16S rRNA at the A site. In Sulfurovum sp. (strain NBC37-1), this protein is Small ribosomal subunit protein uS14.